Reading from the N-terminus, the 36-residue chain is Photosystem I reaction center subunit VIII (36 aa).

A helical membrane pass occupies residues 8-28 (AILVPIVGLVFPALSMALFFI).

Belongs to the PsaI family.

It is found in the plastid. The protein resides in the chloroplast thylakoid membrane. In terms of biological role, may help in the organization of the PsaL subunit. The sequence is that of Photosystem I reaction center subunit VIII from Phaeodactylum tricornutum (strain CCAP 1055/1).